Here is a 91-residue protein sequence, read N- to C-terminus: Cell division topological specificity factor (91 aa).

The protein belongs to the MinE family.

Prevents the cell division inhibition by proteins MinC and MinD at internal division sites while permitting inhibition at polar sites. This ensures cell division at the proper site by restricting the formation of a division septum at the midpoint of the long axis of the cell. The sequence is that of Cell division topological specificity factor from Caldanaerobacter subterraneus subsp. tengcongensis (strain DSM 15242 / JCM 11007 / NBRC 100824 / MB4) (Thermoanaerobacter tengcongensis).